Here is a 197-residue protein sequence, read N- to C-terminus: Protein Hikeshi (197 aa).

The tract at residues 18 to 55 is required for F-X-F-G repeats-nucleoporins recognition and nuclear import; it reads VAEDKFVFDLPDYENINHVVVFMLGTIPFPEGMGGSVY. Residues 124-134 are flexible linker region involved in nuclear import of HSP70 proteins; that stretch reads QTPVGSAAVSS.

This sequence belongs to the OPI10 family. In terms of assembly, forms an asymmetric homodimer; required for binding and nuclear import of HSP70 proteins. Interacts with ATP-bound HSP70 proteins. Interacts with NUP62 and NUP153 (via F-X-F-G repeats). Interacts with HSPA8. Expressed in the central white matter of newborn and adult brain, particularly in regions where oligodendrocytes are generated.

The protein localises to the cytoplasm. The protein resides in the cytosol. It is found in the nucleus. Functionally, acts as a specific nuclear import carrier for HSP70 proteins following heat-shock stress: acts by mediating the nucleoporin-dependent translocation of ATP-bound HSP70 proteins into the nucleus. HSP70 proteins import is required to protect cells from heat shock damages. Does not translocate ADP-bound HSP70 proteins into the nucleus. May also be indirectly required for organization and/or function of the secretory apparatus in Club cells in lung. This Mus musculus (Mouse) protein is Protein Hikeshi.